Consider the following 349-residue polypeptide: Guanine nucleotide-binding protein-like alpha-10 subunit (349 aa).

The region spanning 33–349 (EEIRVLIYGQ…LNITYNSVKN (317 aa)) is the G-alpha domain. Residues 36-49 (RVLIYGQKKVGVTT) form a G1 motif region. Residues 168-176 (DLNFIKLTQ) form a G2 motif region. A G3 motif region spans residues 191–200 (IKMIEMGIQT). GTP contacts are provided by residues 195–199 (EMGIQ) and 266–269 (NKKD). The interval 262–269 (IVFFNKKD) is G4 motif. Residues 320–325 (NEESEV) form a G5 motif region.

It belongs to the G-alpha family.

The polypeptide is Guanine nucleotide-binding protein-like alpha-10 subunit (gpaJ) (Dictyostelium discoideum (Social amoeba)).